Consider the following 516-residue polypeptide: L-amino-acid oxidase (516 aa).

Positions 1–18 (MNVFFMFSLLFLAALGSC) are cleaved as a signal peptide. Cysteine 28 and cysteine 189 form a disulfide bridge. FAD-binding positions include 61-62 (MA), 81-82 (EA), arginine 89, and 103-106 (GPMR). Residues arginine 106 and histidine 239 each contribute to the substrate site. FAD is bound at residue valine 279. Cysteine 349 and cysteine 430 form a disulfide bridge. A glycan (N-linked (GlcNAc...) asparagine) is linked at asparagine 379. Tyrosine 390 is a binding site for substrate. FAD-binding positions include glutamate 475 and 482–487 (GWIDST). 482–483 (GW) is a substrate binding site.

It belongs to the flavin monoamine oxidase family. FIG1 subfamily. As to quaternary structure, homodimer; non-covalently linked. It depends on FAD as a cofactor. In terms of processing, N-glycosylated. In terms of tissue distribution, expressed by the venom gland.

It is found in the secreted. It carries out the reaction an L-alpha-amino acid + O2 + H2O = a 2-oxocarboxylate + H2O2 + NH4(+). It catalyses the reaction L-leucine + O2 + H2O = 4-methyl-2-oxopentanoate + H2O2 + NH4(+). The catalysed reaction is L-phenylalanine + O2 + H2O = 3-phenylpyruvate + H2O2 + NH4(+). The enzyme catalyses L-methionine + O2 + H2O = 4-methylsulfanyl-2-oxobutanoate + H2O2 + NH4(+). It carries out the reaction L-arginine + O2 + H2O = 5-guanidino-2-oxopentanoate + H2O2 + NH4(+). Its function is as follows. Catalyzes an oxidative deamination of predominantly hydrophobic and aromatic L-amino acids, thus producing hydrogen peroxide that may contribute to the diverse toxic effects of this enzyme. Is active on L-Arg, L-Phe, L-Met, and L-Leu and is weakly active on L-Val. Exhibits diverse biological activities, such as hemorrhage, hemolysis, edema, apoptosis of vascular endothelial cells or tumor cell lines, antibacterial and antiparasitic activities, as well as regulation of platelet aggregation. Its effect on platelets is controversial, since it either induces aggregation or inhibits agonist-induced aggregation. These different effects are probably due to different experimental conditions. In Crotalus adamanteus (Eastern diamondback rattlesnake), this protein is L-amino-acid oxidase.